Reading from the N-terminus, the 523-residue chain is Tyrosine/DOPA decarboxylase 5 (523 aa).

A compositionally biased stretch (polar residues) spans 1 to 19; the sequence is MGSLPTDNLESMSICSQNP. Disordered stretches follow at residues 1–20 and 47–66; these read MGSL…QNPL and SRSQ…APNH. Position 321 is an N6-(pyridoxal phosphate)lysine (K321).

Belongs to the group II decarboxylase family. In terms of assembly, homodimer. It depends on pyridoxal 5'-phosphate as a cofactor. As to expression, roots.

The enzyme catalyses L-tyrosine + H(+) = tyramine + CO2. It carries out the reaction L-dopa + H(+) = dopamine + CO2. It catalyses the reaction 5-hydroxy-L-tryptophan + H(+) = serotonin + CO2. May play an important role in providing precursors for alkaloid synthesis in the roots and germinating seedlings. This is Tyrosine/DOPA decarboxylase 5 (TYDC5) from Papaver somniferum (Opium poppy).